The following is a 585-amino-acid chain: RNA polymerase sigma factor RpoD (585 aa).

The interval 67–93 (PASTLVPKDDSKPARKKKESSASTSGS) is disordered. The interval 351–421 (LVKANLRLVV…TRAISDQART (71 aa)) is sigma-70 factor domain-2. An Interaction with polymerase core subunit RpoC motif is present at residues 375–378 (DLIQ). Residues 430 to 506 (EQVNKVIRET…DTEVETPVNA (77 aa)) are sigma-70 factor domain-3. Positions 519 to 572 (VLHTLPAREQKVIRMRFGLDDGYPQTLEEVGYQFKVTRERIRQIEAKALRRLRH) are sigma-70 factor domain-4. The H-T-H motif DNA-binding region spans 545–564 (LEEVGYQFKVTRERIRQIEA).

It belongs to the sigma-70 factor family. RpoD/SigA subfamily. Interacts transiently with the RNA polymerase catalytic core.

Its subcellular location is the cytoplasm. Sigma factors are initiation factors that promote the attachment of RNA polymerase to specific initiation sites and are then released. This sigma factor is the primary sigma factor during exponential growth. The protein is RNA polymerase sigma factor RpoD of Leptospira interrogans serogroup Icterohaemorrhagiae serovar copenhageni (strain Fiocruz L1-130).